The chain runs to 186 residues: ATP synthase subunit delta, chloroplastic (186 aa).

This sequence belongs to the ATPase delta chain family. As to quaternary structure, F-type ATPases have 2 components, F(1) - the catalytic core - and F(0) - the membrane proton channel. F(1) has five subunits: alpha(3), beta(3), gamma(1), delta(1), epsilon(1). CF(0) has four main subunits: a(1), b(1), b'(1) and c(10-14). The alpha and beta chains form an alternating ring which encloses part of the gamma chain. F(1) is attached to F(0) by a central stalk formed by the gamma and epsilon chains, while a peripheral stalk is formed by the delta, b and b' chains.

It localises to the plastid. It is found in the chloroplast thylakoid membrane. F(1)F(0) ATP synthase produces ATP from ADP in the presence of a proton or sodium gradient. F-type ATPases consist of two structural domains, F(1) containing the extramembraneous catalytic core and F(0) containing the membrane proton channel, linked together by a central stalk and a peripheral stalk. During catalysis, ATP synthesis in the catalytic domain of F(1) is coupled via a rotary mechanism of the central stalk subunits to proton translocation. In terms of biological role, this protein is part of the stalk that links CF(0) to CF(1). It either transmits conformational changes from CF(0) to CF(1) or is implicated in proton conduction. The chain is ATP synthase subunit delta, chloroplastic from Porphyra purpurea (Red seaweed).